Reading from the N-terminus, the 603-residue chain is Sesquiterpene synthase Cad (603 aa).

A compositionally biased stretch (polar residues) spans 1–13 (MAEVGLSQNSYAS). A disordered region spans residues 1 to 23 (MAEVGLSQNSYASANHDKKSEQQ). The Mg(2+) site is built by aspartate 357, aspartate 361, aspartate 498, and glutamate 506. The DDXXD motif signature appears at 357–361 (DDIFD).

Belongs to the terpene synthase family. Tpsa subfamily. It depends on Mg(2+) as a cofactor. Requires Mn(2+) as cofactor. In terms of tissue distribution, mostly expressed in leaves and, to a lower extent, in stems and xylem.

It carries out the reaction (2E,6E)-farnesyl diphosphate = beta-cadinene + diphosphate. The protein operates within secondary metabolite biosynthesis; terpenoid biosynthesis. In terms of biological role, sesquiterpene synthase involved in the biosynthesis of volatile compounds. Mediates the conversion of (2E,6E)-farnesyl diphosphate (FPP) into beta-cadinene. Not active with geranyl diphosphate (GPP) and geranylgeranyl diphosphate (GGPP) as substrates. The protein is Sesquiterpene synthase Cad of Chamaecyparis formosensis (Formosan cypress).